An 815-amino-acid polypeptide reads, in one-letter code: SNF1 protein kinase subunit beta-1 (815 aa).

The span at 1-11 (MGNSPSTQDPS) shows a compositional bias: polar residues. 2 disordered regions span residues 1-88 (MGNS…TIDK) and 117-146 (SDDHDVGAPEEQVKSPSFLSPGPSMATVKR). The N-myristoyl glycine moiety is linked to residue Gly-2. A compositionally biased stretch (basic and acidic residues) spans 12-31 (HSTKKEHGHHFHDAFNKDRQ). The segment covering 32-42 (GSITSQLFNNR) has biased composition (polar residues). Ser-33 is subject to Phosphoserine. Composition is skewed to basic and acidic residues over residues 72 to 88 (PSTDCDGRMSSDTTIDK) and 117 to 129 (SDDHDVGAPEEQV). 6 positions are modified to phosphoserine: Ser-181, Ser-198, Ser-200, Ser-206, Ser-209, and Ser-220. 2 disordered regions span residues 311–335 (HANNNGNIENNTRNKGNAGGSNDDF) and 362–389 (KHHNKTKKAQNKKIRSVSNSRRSSFASL). A compositionally biased stretch (low complexity) spans 313–326 (NNNGNIENNTRNKG). Phosphoserine is present on Ser-331. Residues 363–376 (HHNKTKKAQNKKIR) show a composition bias toward basic residues. Positions 377–389 (SVSNSRRSSFASL) are enriched in low complexity. The tract at residues 473-716 (VSTDIASALK…LQQGGNIDAE (244 aa)) is kinase-interacting sequence (KIS); required for interaction with SNF1. A phosphoserine mark is found at Ser-494 and Ser-497. The segment at 581-616 (EPTLDEELPKRPELKRFPSSSRKSSYYSAKGVERPS) is disordered. Basic and acidic residues predominate over residues 587–596 (ELPKRPELKR). The segment covering 599 to 608 (SSSRKSSYYS) has biased composition (low complexity). Ser-643 carries the post-translational modification Phosphoserine. Residues 724 to 804 (SRYPVPDLPI…FITQVVYAPC (81 aa)) are association with SNF1 kinase complex (ASC) domain; required for interaction with SNF4.

This sequence belongs to the 5'-AMP-activated protein kinase beta subunit family. As to quaternary structure, component of the SNF1 kinase complex, a heterotrimeric complex composed of the catalytic alpha subunit SNF1, one of the three related beta subunits SIP1, SIP2 or GAL83, and the regulatory gamma subunit SNF4. The beta subunit serves as a bridge between the catalytic and the regulatory subunit. Interacts (via KIS domain) with SNF1. Interacts (via ASC domain) with SNF4. Phosphorylated by SNF1 in vitro.

It is found in the cytoplasm. The protein resides in the vacuole membrane. Beta subunit of the SNF1 kinase complex, which is required for transcriptional, metabolic, and developmental adaptations in response to glucose limitation. Has a structural role, mediating heterotrimer formation, and a regulatory role, defining carbon source-regulated subcellular location and substrate specificity of the SNF1 kinase complex. Promotes the PKA-regulated relocalization of the SNF1 kinase complex to the vacuolar membrane in response to various types of carbon stress. This chain is SNF1 protein kinase subunit beta-1 (SIP1), found in Saccharomyces cerevisiae (strain ATCC 204508 / S288c) (Baker's yeast).